Reading from the N-terminus, the 543-residue chain is MESQRSFLLIGLAMVSFLLWQQWQVDYGPQPAQPVESQQTTGSDAPNSNGDVPIATPTNKSALPTQSVVGKVISVTTDTLQLSINTVGGDVISANLLKYPLEQGSQGTYSLLRPSGPTIFVAQSGLVGTNGIDKGSRPTYSVSQDSFVMEGDSLTVPLTYTAKSGLLVTKEFIFSKNSHEVKVNYHVENTSSDVKSVKQFGQLKQSTADQGGSMFMPTYRGGAFSTEDERYEKYSFDDMQDKNLNQVTPAGWTAMIEHYFVSAWVPPQDQTNSLYSKMTQNGNAIIGFIGQSVDIEPGQSVDIQSSLYLGPKDQDTLEKIARGLDLTVDYGFLWWISKYLFAFLQFIHSLIGNWGFSIILITIVVKGAMYPLTKAQYESMAKMRALKPKMDALKERYGDDKQKMQQAMMEMYKKDKVNPMGGCFPLLLQMPIFLALYWVLLESVELRHANFIFWITDLSVKDPYFVLPILTGLSMYLLQKLQPMTMTDPMQQKIMQFMPVAMSLFFFIFPAGLVLYWLISNIITLIQAKIIYASMEKRGLKTK.

A helical membrane pass occupies residues 7-27 (FLLIGLAMVSFLLWQQWQVDY). Residues 30 to 61 (QPAQPVESQQTTGSDAPNSNGDVPIATPTNKS) are disordered. Positions 35–61 (VESQQTTGSDAPNSNGDVPIATPTNKS) are enriched in polar residues. 4 consecutive transmembrane segments (helical) span residues 341-361 (FAFL…IILI), 421-441 (GGCF…WVLL), 451-471 (FIFW…PILT), and 499-519 (PVAM…YWLI).

Belongs to the OXA1/ALB3/YidC family. Type 1 subfamily. In terms of assembly, interacts with the Sec translocase complex via SecD. Specifically interacts with transmembrane segments of nascent integral membrane proteins during membrane integration.

It localises to the cell inner membrane. In terms of biological role, required for the insertion and/or proper folding and/or complex formation of integral membrane proteins into the membrane. Involved in integration of membrane proteins that insert both dependently and independently of the Sec translocase complex, as well as at least some lipoproteins. Aids folding of multispanning membrane proteins. The sequence is that of Membrane protein insertase YidC from Pseudoalteromonas atlantica (strain T6c / ATCC BAA-1087).